We begin with the raw amino-acid sequence, 309 residues long: Methionyl-tRNA formyltransferase (309 aa).

107–110 (SLLP) lines the (6S)-5,6,7,8-tetrahydrofolate pocket.

The protein belongs to the Fmt family.

The enzyme catalyses L-methionyl-tRNA(fMet) + (6R)-10-formyltetrahydrofolate = N-formyl-L-methionyl-tRNA(fMet) + (6S)-5,6,7,8-tetrahydrofolate + H(+). Functionally, attaches a formyl group to the free amino group of methionyl-tRNA(fMet). The formyl group appears to play a dual role in the initiator identity of N-formylmethionyl-tRNA by promoting its recognition by IF2 and preventing the misappropriation of this tRNA by the elongation apparatus. This Borrelia hermsii (strain HS1 / DAH) protein is Methionyl-tRNA formyltransferase.